The chain runs to 1299 residues: DNA-directed RNA polymerase subunit beta' (1299 aa).

Cys60, Cys62, Cys75, and Cys78 together coordinate Zn(2+). The tract at residues 385 to 405 (GRRGRPVTGPGNRPLKSLSDM) is disordered. The Mg(2+) site is built by Asp535, Asp537, and Asp539. The Zn(2+) site is built by Cys886, Cys962, Cys969, and Cys972.

It belongs to the RNA polymerase beta' chain family. The RNAP catalytic core consists of 2 alpha, 1 beta, 1 beta' and 1 omega subunit. When a sigma factor is associated with the core the holoenzyme is formed, which can initiate transcription. Requires Mg(2+) as cofactor. Zn(2+) serves as cofactor.

The catalysed reaction is RNA(n) + a ribonucleoside 5'-triphosphate = RNA(n+1) + diphosphate. DNA-dependent RNA polymerase catalyzes the transcription of DNA into RNA using the four ribonucleoside triphosphates as substrates. The chain is DNA-directed RNA polymerase subunit beta' from Streptomyces coelicolor (strain ATCC BAA-471 / A3(2) / M145).